The sequence spans 336 residues: Probable G-protein coupled receptor 82 (336 aa).

The Extracellular segment spans residues 1 to 11 (MNNNTTCIQPS). Asn-3 and Asn-4 each carry an N-linked (GlcNAc...) asparagine glycan. The helical transmembrane segment at 12–32 (MISSMALPIIYILLCIVGVFG) threads the bilayer. Topologically, residues 33-55 (NTLSQWIFLTKIGKKTSTHIYLS) are cytoplasmic. The helical transmembrane segment at 56 to 76 (HLVTANLLVCSAMPFMSIYFL) threads the bilayer. Topologically, residues 77–92 (KGFQWEYQSAQCRVVN) are extracellular. A helical membrane pass occupies residues 93–115 (FLGTLSMHASMFVSLLILSWIAI). The Cytoplasmic segment spans residues 116 to 156 (SRYATLMQKDSSQETTSCYEKIFYGHLLKKFRQPNFARKLC). Residues 157-177 (IYIWGVVLGIIIPVTVYYSVI) form a helical membrane-spanning segment. Residues 178 to 197 (EATEGEESLCYNRQMELGAM) lie on the Extracellular side of the membrane. The helical transmembrane segment at 198–218 (ISQIAGLIGTTFIGFSFLVVL) threads the bilayer. Topologically, residues 219–251 (TSYYSFVSHLRKIRTCTSIMEKDLTYSSVKRHL) are cytoplasmic. The helical transmembrane segment at 252–272 (LVIQILLIVCFLPYSIFKPIF) threads the bilayer. Over 273–336 (YVLHQRDNCQ…SNSAHMQSYG (64 aa)) the chain is Extracellular.

The protein belongs to the G-protein coupled receptor 1 family.

The protein localises to the cell membrane. In terms of biological role, orphan receptor. The protein is Probable G-protein coupled receptor 82 (GPR82) of Homo sapiens (Human).